The following is a 210-amino-acid chain: Glutathione S-transferase P (210 aa).

Positions 2–81 constitute a GST N-terminal domain; the sequence is PPYTIVYFPV…HLGRSLGLYG (80 aa). The residue at position 4 (Tyr-4) is a Phosphotyrosine; by EGFR. Glutathione contacts are provided by residues Tyr-8, Arg-14, Trp-39, Lys-45, and 52 to 53; that span reads QL. Thr-62 carries the post-translational modification Phosphothreonine. A glutathione-binding site is contributed by 65–66; the sequence is QS. Positions 83–204 constitute a GST C-terminal domain; sequence DQREAALVDM…SSPDHVNRPI (122 aa). An N6-succinyllysine mark is found at Lys-103 and Lys-116. Lys-128 bears the N6-acetyllysine mark.

The protein belongs to the GST superfamily. Pi family. In terms of assembly, homodimer. Interacts with CDK5.

The protein localises to the cytoplasm. The protein resides in the mitochondrion. Its subcellular location is the nucleus. It catalyses the reaction RX + glutathione = an S-substituted glutathione + a halide anion + H(+). It carries out the reaction prostaglandin J2 + glutathione = prostaglandin J2-S-(R)-glutathione. The catalysed reaction is prostaglandin J2 + glutathione = prostaglandin J2-S-(S)-glutathione. The enzyme catalyses prostaglandin A2 + glutathione = prostaglandin A2-S-(S)-glutathione. It catalyses the reaction 11(S)-hydroxy-14(S),15(S)-epoxy-(5Z,8Z,12E)-eicosatrienoate + glutathione = (11S,15S)-dihydroxy-14(R)-S-glutathionyl-(5Z,8Z,12E)-eicosatrienoate. In terms of biological role, conjugation of reduced glutathione to a wide number of exogenous and endogenous hydrophobic electrophiles. Involved in the formation of glutathione conjugates of both prostaglandin A2 (PGA2) and prostaglandin J2 (PGJ2). Participates in the formation of novel hepoxilin regioisomers. Negatively regulates CDK5 activity via p25/p35 translocation to prevent neurodegeneration. The protein is Glutathione S-transferase P (GSTP1) of Cricetulus longicaudatus (Long-tailed dwarf hamster).